Reading from the N-terminus, the 216-residue chain is Thiamine-phosphate synthase (216 aa).

4-amino-2-methyl-5-(diphosphooxymethyl)pyrimidine-binding positions include 41–45 (QLREK) and Asp77. 2 residues coordinate Mg(2+): Asp78 and Asp97. Ser116 lines the 4-amino-2-methyl-5-(diphosphooxymethyl)pyrimidine pocket. 143 to 145 (TTS) serves as a coordination point for 2-[(2R,5Z)-2-carboxy-4-methylthiazol-5(2H)-ylidene]ethyl phosphate. Residue Lys146 coordinates 4-amino-2-methyl-5-(diphosphooxymethyl)pyrimidine. Residues Gly174 and 194–195 (IS) contribute to the 2-[(2R,5Z)-2-carboxy-4-methylthiazol-5(2H)-ylidene]ethyl phosphate site.

This sequence belongs to the thiamine-phosphate synthase family. Mg(2+) serves as cofactor.

The catalysed reaction is 2-[(2R,5Z)-2-carboxy-4-methylthiazol-5(2H)-ylidene]ethyl phosphate + 4-amino-2-methyl-5-(diphosphooxymethyl)pyrimidine + 2 H(+) = thiamine phosphate + CO2 + diphosphate. It carries out the reaction 2-(2-carboxy-4-methylthiazol-5-yl)ethyl phosphate + 4-amino-2-methyl-5-(diphosphooxymethyl)pyrimidine + 2 H(+) = thiamine phosphate + CO2 + diphosphate. The enzyme catalyses 4-methyl-5-(2-phosphooxyethyl)-thiazole + 4-amino-2-methyl-5-(diphosphooxymethyl)pyrimidine + H(+) = thiamine phosphate + diphosphate. It participates in cofactor biosynthesis; thiamine diphosphate biosynthesis; thiamine phosphate from 4-amino-2-methyl-5-diphosphomethylpyrimidine and 4-methyl-5-(2-phosphoethyl)-thiazole: step 1/1. Functionally, condenses 4-methyl-5-(beta-hydroxyethyl)thiazole monophosphate (THZ-P) and 2-methyl-4-amino-5-hydroxymethyl pyrimidine pyrophosphate (HMP-PP) to form thiamine monophosphate (TMP). The polypeptide is Thiamine-phosphate synthase (Pediococcus pentosaceus (strain ATCC 25745 / CCUG 21536 / LMG 10740 / 183-1w)).